The primary structure comprises 162 residues: Regulatory protein RecX (162 aa).

The protein belongs to the RecX family.

It is found in the cytoplasm. In terms of biological role, modulates RecA activity. This Xanthomonas oryzae pv. oryzae (strain PXO99A) protein is Regulatory protein RecX.